The chain runs to 152 residues: uncharacterized protein (152 aa).

Transmembrane regions (helical) follow at residues 13-33, 38-58, and 69-89; these read LLWFLLVPLVVYALLLLLLFF, LIVEAIPFCYGIALMMISLFM, and WVIFGRFVLVLVVLMLSFFVI.

It is found in the cell membrane. This is an uncharacterized protein from Mycoplasma pneumoniae (strain ATCC 29342 / M129 / Subtype 1) (Mycoplasmoides pneumoniae).